The following is a 264-amino-acid chain: Thymidylate synthase (264 aa).

Arginine 21 contributes to the dUMP binding site. Position 51 (histidine 51) interacts with (6R)-5,10-methylene-5,6,7,8-tetrahydrofolate. 126–127 (RR) lines the dUMP pocket. The Nucleophile role is filled by cysteine 146. DUMP contacts are provided by residues 166–169 (RSAD), asparagine 177, and 207–209 (HIY). A (6R)-5,10-methylene-5,6,7,8-tetrahydrofolate-binding site is contributed by aspartate 169. Residue alanine 263 coordinates (6R)-5,10-methylene-5,6,7,8-tetrahydrofolate.

Belongs to the thymidylate synthase family. Bacterial-type ThyA subfamily. Homodimer.

It localises to the cytoplasm. The enzyme catalyses dUMP + (6R)-5,10-methylene-5,6,7,8-tetrahydrofolate = 7,8-dihydrofolate + dTMP. It participates in pyrimidine metabolism; dTTP biosynthesis. Its function is as follows. Catalyzes the reductive methylation of 2'-deoxyuridine-5'-monophosphate (dUMP) to 2'-deoxythymidine-5'-monophosphate (dTMP) while utilizing 5,10-methylenetetrahydrofolate (mTHF) as the methyl donor and reductant in the reaction, yielding dihydrofolate (DHF) as a by-product. This enzymatic reaction provides an intracellular de novo source of dTMP, an essential precursor for DNA biosynthesis. In Brucella anthropi (strain ATCC 49188 / DSM 6882 / CCUG 24695 / JCM 21032 / LMG 3331 / NBRC 15819 / NCTC 12168 / Alc 37) (Ochrobactrum anthropi), this protein is Thymidylate synthase.